Consider the following 532-residue polypeptide: T-complex protein 1 subunit beta (532 aa).

The protein belongs to the TCP-1 chaperonin family. In terms of assembly, heterooligomeric complex of about 850 to 900 kDa that forms two stacked rings, 12 to 16 nm in diameter.

The protein localises to the cytoplasm. Molecular chaperone; assists the folding of proteins upon ATP hydrolysis. Known to play a role, in vitro, in the folding of actin and tubulin. The polypeptide is T-complex protein 1 subunit beta (cct2) (Dictyostelium discoideum (Social amoeba)).